The sequence spans 155 residues: Urease accessory protein UreE (155 aa).

It belongs to the UreE family.

The protein localises to the cytoplasm. Involved in urease metallocenter assembly. Binds nickel. Probably functions as a nickel donor during metallocenter assembly. This chain is Urease accessory protein UreE, found in Deinococcus radiodurans (strain ATCC 13939 / DSM 20539 / JCM 16871 / CCUG 27074 / LMG 4051 / NBRC 15346 / NCIMB 9279 / VKM B-1422 / R1).